Reading from the N-terminus, the 542-residue chain is Chaperonin GroEL (542 aa).

Residues 29-32, 86-90, G413, 476-478, and D492 each bind ATP; these read TLGP, DGTTT, and NAA.

This sequence belongs to the chaperonin (HSP60) family. As to quaternary structure, forms a cylinder of 14 subunits composed of two heptameric rings stacked back-to-back. Interacts with the co-chaperonin GroES.

Its subcellular location is the cytoplasm. It carries out the reaction ATP + H2O + a folded polypeptide = ADP + phosphate + an unfolded polypeptide.. In terms of biological role, together with its co-chaperonin GroES, plays an essential role in assisting protein folding. The GroEL-GroES system forms a nano-cage that allows encapsulation of the non-native substrate proteins and provides a physical environment optimized to promote and accelerate protein folding. The polypeptide is Chaperonin GroEL (Lactococcus lactis subsp. cremoris (strain MG1363)).